The primary structure comprises 192 residues: Fe/S biogenesis protein NfuA (192 aa).

2 residues coordinate [4Fe-4S] cluster: cysteine 149 and cysteine 152.

Belongs to the NfuA family. Homodimer. Requires [4Fe-4S] cluster as cofactor.

Involved in iron-sulfur cluster biogenesis. Binds a 4Fe-4S cluster, can transfer this cluster to apoproteins, and thereby intervenes in the maturation of Fe/S proteins. Could also act as a scaffold/chaperone for damaged Fe/S proteins. The polypeptide is Fe/S biogenesis protein NfuA (Shewanella loihica (strain ATCC BAA-1088 / PV-4)).